The chain runs to 289 residues: 2-hydroxy-6-oxononadienedioate/2-hydroxy-6-oxononatrienedioate hydrolase (289 aa).

The region spanning 39–275 (TVVMLHGSGP…RCGHWAQWEH (237 aa)) is the AB hydrolase-1 domain. Catalysis depends on H269, which acts as the Proton acceptor.

It belongs to the AB hydrolase superfamily. MhpC family. Homodimer.

The catalysed reaction is (2Z,4E)-2-hydroxy-6-oxonona-2,4-dienedioate + H2O = (2Z)-2-hydroxypenta-2,4-dienoate + succinate + H(+). The enzyme catalyses (2Z,4E,7E)-2-hydroxy-6-oxonona-2,4,7-trienedioate + H2O = (2Z)-2-hydroxypenta-2,4-dienoate + fumarate + H(+). It participates in aromatic compound metabolism; 3-phenylpropanoate degradation. Its function is as follows. Catalyzes the cleavage of the C5-C6 bond of 2-hydroxy-6-oxononadienedioate and 2-hydroxy-6-oxononatrienedioate, a dienol ring fission product of the bacterial meta-cleavage pathway for degradation of phenylpropionic acid. The protein is 2-hydroxy-6-oxononadienedioate/2-hydroxy-6-oxononatrienedioate hydrolase of Paraburkholderia xenovorans (strain LB400).